Reading from the N-terminus, the 147-residue chain is D-aminoacyl-tRNA deacylase (147 aa).

The Gly-cisPro motif, important for rejection of L-amino acids motif lies at Gly-136–Pro-137.

This sequence belongs to the DTD family. In terms of assembly, homodimer.

The protein localises to the cytoplasm. The catalysed reaction is glycyl-tRNA(Ala) + H2O = tRNA(Ala) + glycine + H(+). The enzyme catalyses a D-aminoacyl-tRNA + H2O = a tRNA + a D-alpha-amino acid + H(+). An aminoacyl-tRNA editing enzyme that deacylates mischarged D-aminoacyl-tRNAs. Also deacylates mischarged glycyl-tRNA(Ala), protecting cells against glycine mischarging by AlaRS. Acts via tRNA-based rather than protein-based catalysis; rejects L-amino acids rather than detecting D-amino acids in the active site. By recycling D-aminoacyl-tRNA to D-amino acids and free tRNA molecules, this enzyme counteracts the toxicity associated with the formation of D-aminoacyl-tRNA entities in vivo and helps enforce protein L-homochirality. This Nitratiruptor sp. (strain SB155-2) protein is D-aminoacyl-tRNA deacylase.